Reading from the N-terminus, the 151-residue chain is MDASKLKKVAGKKFGGPRKKSVTRSIKAGLQFPVGRIGRYLKKGRYAQRVGSGAPVYLAAVLEYLAAEVLELAGNAAKDNKKSRIVPRHLLLAVRNDQELGRLLAGVTIAHGGVIPNINPVLLPKKAAEKAEKAGTKAKSPKKATKSPKKA.

Residue M1 is modified to N-acetylmethionine. Positions 129 to 151 are disordered; sequence EKAEKAGTKAKSPKKATKSPKKA. Over residues 139 to 151 the composition is skewed to basic residues; the sequence is KSPKKATKSPKKA. 2 short sequence motifs (SPKK motif) span residues 140–143 and 147–150; these read SPKK.

The protein belongs to the histone H2A family. The nucleosome is a histone octamer containing two molecules each of H2A, H2B, H3 and H4 assembled in one H3-H4 heterotetramer and two H2A-H2B heterodimers. The octamer wraps approximately 147 bp of DNA. In terms of processing, phosphorylated within its C-terminal part, probably at the SPKK motifs.

The protein localises to the nucleus. The protein resides in the chromosome. Core component of nucleosome. Nucleosomes wrap and compact DNA into chromatin, limiting DNA accessibility to the cellular machineries which require DNA as a template. Histones thereby play a central role in transcription regulation, DNA repair, DNA replication and chromosomal stability. DNA accessibility is regulated via a complex set of post-translational modifications of histones, also called histone code, and nucleosome remodeling. The sequence is that of Histone H2A.2.2 from Triticum aestivum (Wheat).